Here is a 180-residue protein sequence, read N- to C-terminus: ATP-dependent protease subunit HslV (180 aa).

The active site involves Thr8. Ala165, Cys168, and Thr171 together coordinate Na(+).

This sequence belongs to the peptidase T1B family. HslV subfamily. As to quaternary structure, a double ring-shaped homohexamer of HslV is capped on each side by a ring-shaped HslU homohexamer. The assembly of the HslU/HslV complex is dependent on binding of ATP.

The protein resides in the cytoplasm. It carries out the reaction ATP-dependent cleavage of peptide bonds with broad specificity.. Its activity is regulated as follows. Allosterically activated by HslU binding. Functionally, protease subunit of a proteasome-like degradation complex believed to be a general protein degrading machinery. This is ATP-dependent protease subunit HslV from Staphylococcus epidermidis (strain ATCC 12228 / FDA PCI 1200).